A 404-amino-acid polypeptide reads, in one-letter code: Tryptophan synthase beta chain (404 aa).

Lys-98 bears the N6-(pyridoxal phosphate)lysine mark.

It belongs to the TrpB family. In terms of assembly, tetramer of two alpha and two beta chains. The cofactor is pyridoxal 5'-phosphate.

It carries out the reaction (1S,2R)-1-C-(indol-3-yl)glycerol 3-phosphate + L-serine = D-glyceraldehyde 3-phosphate + L-tryptophan + H2O. It functions in the pathway amino-acid biosynthesis; L-tryptophan biosynthesis; L-tryptophan from chorismate: step 5/5. Functionally, the beta subunit is responsible for the synthesis of L-tryptophan from indole and L-serine. The sequence is that of Tryptophan synthase beta chain from Acidiphilium cryptum (strain JF-5).